Here is a 344-residue protein sequence, read N- to C-terminus: Probable glucan endo-1,3-beta-glucosidase At4g16260 (344 aa).

Residues 1-21 (MTTLFLLIALFITTILNPTSG) form the signal peptide. The Proton donor role is filled by Glu-116. Catalysis depends on Glu-257, which acts as the Nucleophile.

The protein belongs to the glycosyl hydrolase 17 family. As to quaternary structure, (Microbial infection) Interacts with the 30C02 effector protein (AC G3GD54) of the beet cyst nematode Heterodera schachtii. Interaction with the 30C02 effector protein may potentially suppress beta-1,3-glucanase activity and plant defense.

It localises to the secreted. It catalyses the reaction Hydrolysis of (1-&gt;3)-beta-D-glucosidic linkages in (1-&gt;3)-beta-D-glucans.. Its function is as follows. May be involved in plant defense against cyst nematode pathogens. The sequence is that of Probable glucan endo-1,3-beta-glucosidase At4g16260 from Arabidopsis thaliana (Mouse-ear cress).